Consider the following 91-residue polypeptide: Small ribosomal subunit protein bS18 (91 aa).

The disordered stretch occupies residues 1–21; sequence MSDERTPQRSSGPRKKRPFQR. A compositionally biased stretch (basic residues) spans 12–21; the sequence is GPRKKRPFQR.

It belongs to the bacterial ribosomal protein bS18 family. Part of the 30S ribosomal subunit. Forms a tight heterodimer with protein bS6.

Functionally, binds as a heterodimer with protein bS6 to the central domain of the 16S rRNA, where it helps stabilize the platform of the 30S subunit. The polypeptide is Small ribosomal subunit protein bS18 (Geotalea uraniireducens (strain Rf4) (Geobacter uraniireducens)).